Reading from the N-terminus, the 179-residue chain is Probable galaptin lec-7 (179 aa).

Residues 11 to 138 form the Galectin domain; the sequence is SVYQIEENLK…SVDIESIVFK (128 aa).

This Caenorhabditis elegans protein is Probable galaptin lec-7 (lec-7).